A 156-amino-acid chain; its full sequence is Ribosome-binding factor A (156 aa).

Over residues 125–138 (RVREGAKHAGDPDP) the composition is skewed to basic and acidic residues. Positions 125–156 (RVREGAKHAGDPDPYRVGGAEDTDGDTDGDER) are disordered. Positions 145 to 156 (EDTDGDTDGDER) are enriched in acidic residues.

Belongs to the RbfA family. As to quaternary structure, monomer. Binds 30S ribosomal subunits, but not 50S ribosomal subunits or 70S ribosomes.

The protein localises to the cytoplasm. Its function is as follows. One of several proteins that assist in the late maturation steps of the functional core of the 30S ribosomal subunit. Associates with free 30S ribosomal subunits (but not with 30S subunits that are part of 70S ribosomes or polysomes). Required for efficient processing of 16S rRNA. May interact with the 5'-terminal helix region of 16S rRNA. This is Ribosome-binding factor A from Mycolicibacterium smegmatis (strain ATCC 700084 / mc(2)155) (Mycobacterium smegmatis).